Reading from the N-terminus, the 215-residue chain is Probable phosphoglycerate mutase GpmB (215 aa).

Substrate is bound by residues 8 to 15, 21 to 22, R58, K60, 82 to 85, 104 to 105, and 151 to 152; these read RHGETQWN, QG, ELDM, RR, and GI. The Tele-phosphohistidine intermediate role is filled by H9. Catalysis depends on E82, which acts as the Proton donor/acceptor.

Belongs to the phosphoglycerate mutase family. GpmB subfamily.

The catalysed reaction is (2R)-2-phosphoglycerate = (2R)-3-phosphoglycerate. It functions in the pathway carbohydrate degradation; glycolysis; pyruvate from D-glyceraldehyde 3-phosphate: step 3/5. The polypeptide is Probable phosphoglycerate mutase GpmB (Salmonella paratyphi C (strain RKS4594)).